Reading from the N-terminus, the 387-residue chain is Alpha-maltose-1-phosphate synthase (387 aa).

The protein belongs to the glycosyltransferase group 1 family.

It carries out the reaction ADP-alpha-D-glucose + alpha-D-glucose 1-phosphate = alpha-maltose 1-phosphate + ADP + H(+). It functions in the pathway glycan biosynthesis; glycogen biosynthesis. Functionally, involved in the biosynthesis of the maltose-1-phosphate (M1P) building block required for alpha-glucan production by the key enzyme GlgE. Catalyzes the formation of an alpha-1,4 linkage between glucose from ADP-glucose and glucose 1-phosphate (G1P) to yield maltose-1-phosphate (M1P). This Mycolicibacterium smegmatis (strain ATCC 700084 / mc(2)155) (Mycobacterium smegmatis) protein is Alpha-maltose-1-phosphate synthase.